The following is a 238-amino-acid chain: Large ribosomal subunit protein uL1 (238 aa).

Belongs to the universal ribosomal protein uL1 family. Part of the 50S ribosomal subunit.

Functionally, binds directly to 23S rRNA. The L1 stalk is quite mobile in the ribosome, and is involved in E site tRNA release. In terms of biological role, protein L1 is also a translational repressor protein, it controls the translation of the L11 operon by binding to its mRNA. This chain is Large ribosomal subunit protein uL1, found in Nostoc sp. (strain PCC 7120 / SAG 25.82 / UTEX 2576).